Consider the following 264-residue polypeptide: Acyl-[acyl-carrier-protein]--UDP-N-acetylglucosamine O-acyltransferase (264 aa).

This sequence belongs to the transferase hexapeptide repeat family. LpxA subfamily. In terms of assembly, homotrimer.

It localises to the cytoplasm. It carries out the reaction a (3R)-hydroxyacyl-[ACP] + UDP-N-acetyl-alpha-D-glucosamine = a UDP-3-O-[(3R)-3-hydroxyacyl]-N-acetyl-alpha-D-glucosamine + holo-[ACP]. It participates in glycolipid biosynthesis; lipid IV(A) biosynthesis; lipid IV(A) from (3R)-3-hydroxytetradecanoyl-[acyl-carrier-protein] and UDP-N-acetyl-alpha-D-glucosamine: step 1/6. Its function is as follows. Involved in the biosynthesis of lipid A, a phosphorylated glycolipid that anchors the lipopolysaccharide to the outer membrane of the cell. The protein is Acyl-[acyl-carrier-protein]--UDP-N-acetylglucosamine O-acyltransferase of Rickettsia peacockii (strain Rustic).